Consider the following 251-residue polypeptide: Transcriptional cofactor Bfc (251 aa).

Interacts with srp (via GATA-type Zn-finger domain); this interaction enhances srp binding to the promoter of crq/croquemort.

It is found in the nucleus. In terms of biological role, transcriptional cofactor involved in efferocytosis. Together with srp mediates expression of the phagocytic receptor crq/croquemort in response to apoptotic cells, and is up-regulated by crq/croquemort in a positive feedback mechanism. Involved in macrophage engulfment and clearance of apoptotic cells during embryogenesis. This chain is Transcriptional cofactor Bfc, found in Drosophila melanogaster (Fruit fly).